Here is a 500-residue protein sequence, read N- to C-terminus: Gamma-glutamylanilide synthase (500 aa).

The region spanning 32 to 136 (LGLEMIRLSW…MLADLHWKSG (105 aa)) is the GS beta-grasp domain. In terms of domain architecture, GS catalytic spans 143 to 500 (PRGIMKKAVK…WEQKEYFNLL (358 aa)).

This sequence belongs to the glutamine synthetase family. Homohexamer.

It catalyses the reaction aniline + L-glutamate + ATP = N(5)-phenyl-L-glutamine + ADP + phosphate. Involved in the initial oxidation of aniline to catechol by the release of its amino group. Catalyzes the ATP-dependent ligation of L-glutamate to aniline to yield gamma-glutamylanilide (gamma-GA). AtdA1 has a broad substrate range and is able to convert the following anilines, including chlorinated and methylated forms of aniline: aniline (100%), o-chloroaniline (92%), m-chloroaniline (69%), p-chloroaniline (92%), o-methylaniline (40%), m-methylaniline (27%) and p-methylaniline (45%). This Acinetobacter sp protein is Gamma-glutamylanilide synthase.